A 112-amino-acid polypeptide reads, in one-letter code: MRNIYDLANELERGIRALPEYKNLVEKKEAIATDAEASALFKEFTDFQEDFYAKMQAGTMPTAEEQAAVQELGQKVEANALLKEYLTAQQSLSVYLNDIERIIFKPLQELNN.

It belongs to the UPF0342 family.

The protein is UPF0342 protein STER_0693 of Streptococcus thermophilus (strain ATCC BAA-491 / LMD-9).